We begin with the raw amino-acid sequence, 990 residues long: Insulin-degrading enzyme (990 aa).

His81 lines the Zn(2+) pocket. Glu84 acts as the Proton acceptor in catalysis. Zn(2+)-binding residues include His85 and Glu162.

The protein belongs to the peptidase M16 family. It depends on Zn(2+) as a cofactor.

The enzyme catalyses Degradation of insulin, glucagon and other polypeptides. No action on proteins.. In terms of biological role, can cleave insulin and TGF-alpha. The protein is Insulin-degrading enzyme (Ide) of Drosophila melanogaster (Fruit fly).